The chain runs to 509 residues: 2-isopropylmalate synthase (509 aa).

The region spanning 5–267 is the Pyruvate carboxyltransferase domain; it reads IQIFDTTLRD…QTALNLEETK (263 aa). Residues aspartate 14, histidine 202, histidine 204, and asparagine 238 each contribute to the Mn(2+) site. The interval 391–509 is regulatory domain; sequence KLETLQLQYV…AAENVEKVGN (119 aa).

It belongs to the alpha-IPM synthase/homocitrate synthase family. LeuA type 1 subfamily. Homodimer. Requires Mn(2+) as cofactor.

It localises to the cytoplasm. The catalysed reaction is 3-methyl-2-oxobutanoate + acetyl-CoA + H2O = (2S)-2-isopropylmalate + CoA + H(+). It functions in the pathway amino-acid biosynthesis; L-leucine biosynthesis; L-leucine from 3-methyl-2-oxobutanoate: step 1/4. Its function is as follows. Catalyzes the condensation of the acetyl group of acetyl-CoA with 3-methyl-2-oxobutanoate (2-ketoisovalerate) to form 3-carboxy-3-hydroxy-4-methylpentanoate (2-isopropylmalate). The protein is 2-isopropylmalate synthase of Staphylococcus aureus (strain MRSA252).